Reading from the N-terminus, the 245-residue chain is MINVSTSPRQTLDWTALKPADGSPAVEWRISDSPVPYPEAVATMEARAAAIAAGEATELVWLLEHPPLYTAGTSGHASDLLEERFPLFTTGRGGQLTYHGPGQRVAYVMLDLKRRRPDVRAYVAALEQWIIATLDAFNIRCERREDRVGVWVRRPDKGVGYEDKIAAIGVRLKRWVSLHGIAINVEPDLSHFKAIVPCGISDPRYGVTSLVDLGLPVVMTDVDIALRAAFENIFGETRAAAPAGI.

The region spanning 54–238 (GEATELVWLL…AFENIFGETR (185 aa)) is the BPL/LPL catalytic domain. Residues 92 to 99 (RGGQLTYH), 167 to 169 (AIG), and 180 to 182 (GIA) contribute to the substrate site. Cys198 functions as the Acyl-thioester intermediate in the catalytic mechanism.

It belongs to the LipB family.

It is found in the cytoplasm. It carries out the reaction octanoyl-[ACP] + L-lysyl-[protein] = N(6)-octanoyl-L-lysyl-[protein] + holo-[ACP] + H(+). Its pathway is protein modification; protein lipoylation via endogenous pathway; protein N(6)-(lipoyl)lysine from octanoyl-[acyl-carrier-protein]: step 1/2. Functionally, catalyzes the transfer of endogenously produced octanoic acid from octanoyl-acyl-carrier-protein onto the lipoyl domains of lipoate-dependent enzymes. Lipoyl-ACP can also act as a substrate although octanoyl-ACP is likely to be the physiological substrate. The protein is Octanoyltransferase of Rhodopseudomonas palustris (strain TIE-1).